The primary structure comprises 140 residues: Nucleoside diphosphate kinase (140 aa).

6 residues coordinate ATP: Lys9, Phe57, Arg85, Thr91, Arg102, and Asn112. The active-site Pros-phosphohistidine intermediate is His115.

Belongs to the NDK family. As to quaternary structure, homotetramer. Requires Mg(2+) as cofactor.

It is found in the cytoplasm. The catalysed reaction is a 2'-deoxyribonucleoside 5'-diphosphate + ATP = a 2'-deoxyribonucleoside 5'-triphosphate + ADP. It carries out the reaction a ribonucleoside 5'-diphosphate + ATP = a ribonucleoside 5'-triphosphate + ADP. In terms of biological role, major role in the synthesis of nucleoside triphosphates other than ATP. The ATP gamma phosphate is transferred to the NDP beta phosphate via a ping-pong mechanism, using a phosphorylated active-site intermediate. The protein is Nucleoside diphosphate kinase of Chlorobaculum tepidum (strain ATCC 49652 / DSM 12025 / NBRC 103806 / TLS) (Chlorobium tepidum).